The sequence spans 179 residues: Large ribosomal subunit protein uL6 (179 aa).

A compositionally biased stretch (basic and acidic residues) spans 154–169; it reads EPYKGKGVKYEHEQIR. The interval 154 to 179 is disordered; it reads EPYKGKGVKYEHEQIRRKAGKSGGKK. Positions 170-179 are enriched in basic residues; it reads RKAGKSGGKK.

The protein belongs to the universal ribosomal protein uL6 family. In terms of assembly, part of the 50S ribosomal subunit.

This protein binds to the 23S rRNA, and is important in its secondary structure. It is located near the subunit interface in the base of the L7/L12 stalk, and near the tRNA binding site of the peptidyltransferase center. This Oleidesulfovibrio alaskensis (strain ATCC BAA-1058 / DSM 17464 / G20) (Desulfovibrio alaskensis) protein is Large ribosomal subunit protein uL6.